The chain runs to 621 residues: Interferon-induced GTP-binding protein Mx1 (621 aa).

Positions 31–304 constitute a Dynamin-type G domain; it reads DLALPAIAVI…LVHHIEKSLP (274 aa). The segment at 41 to 48 is G1 motif; it reads GDQSSGKS. Position 41 to 48 (41 to 48) interacts with GTP; that stretch reads GDQSSGKS. Residues 66 to 68 form a G2 motif region; it reads VTR. The G3 motif stretch occupies residues 142–145; it reads DLPG. GTP-binding positions include 142 to 146 and 211 to 214; these read DLPGI and TKPD. A G4 motif region spans residues 211–214; sequence TKPD. A G5 motif region spans residues 243–246; the sequence is KCRG. One can recognise a GED domain in the interval 535-621; sequence LQEMMLHLKS…MKARSYLVEF (87 aa).

The protein belongs to the TRAFAC class dynamin-like GTPase superfamily. Dynamin/Fzo/YdjA family.

It is found in the cytoplasm. In terms of biological role, does not inhibit strain RB-1 of the fish pathogen, infectious hematopoietic necrosis virus (IHNV). This Oncorhynchus mykiss (Rainbow trout) protein is Interferon-induced GTP-binding protein Mx1 (mx1).